Reading from the N-terminus, the 465-residue chain is L-seryl-tRNA(Sec) selenium transferase (465 aa).

The residue at position 294 (Lys294) is an N6-(pyridoxal phosphate)lysine.

The protein belongs to the SelA family. Pyridoxal 5'-phosphate serves as cofactor.

It localises to the cytoplasm. The enzyme catalyses L-seryl-tRNA(Sec) + selenophosphate + H(+) = L-selenocysteinyl-tRNA(Sec) + phosphate. Its pathway is aminoacyl-tRNA biosynthesis; selenocysteinyl-tRNA(Sec) biosynthesis; selenocysteinyl-tRNA(Sec) from L-seryl-tRNA(Sec) (bacterial route): step 1/1. Converts seryl-tRNA(Sec) to selenocysteinyl-tRNA(Sec) required for selenoprotein biosynthesis. The chain is L-seryl-tRNA(Sec) selenium transferase from Mannheimia succiniciproducens (strain KCTC 0769BP / MBEL55E).